A 934-amino-acid polypeptide reads, in one-letter code: Protocadherin gamma-C3 (934 aa).

The signal sequence occupies residues 1-31; it reads MVPEAWRSGLVSTGRVVGVLLLLGALNKAST. 6 Cadherin domains span residues 32-135, 136-244, 245-352, 353-457, 458-567, and 572-685; these read VIHY…NPAF, PTQE…APVF, NQSL…APEI, TVTS…PPQS, SQSS…APQV, and PGGS…APRE. Residues 32 to 693 lie on the Extracellular side of the membrane; the sequence is VIHYEIPEER…REQKKNLTFY (662 aa). N-linked (GlcNAc...) asparagine glycosylation is found at asparagine 245, asparagine 424, asparagine 478, asparagine 550, asparagine 615, and asparagine 689. A helical membrane pass occupies residues 694–714; that stretch reads LLLSLILVSVGFVVTVFGVII. Over 715-934 the chain is Cytoplasmic; the sequence is FKVYKWKQSR…KKKSGKKEKK (220 aa). 2 disordered regions span residues 804 to 843 and 904 to 934; these read ESAP…WPNN and ATLT…KEKK. Over residues 812–843 the composition is skewed to polar residues; it reads APPNTDWRFSQAQRPGTSGSQNGDDTGTWPNN. Basic residues predominate over residues 924–934; that stretch reads NKKKSGKKEKK.

It is found in the cell membrane. Potential calcium-dependent cell-adhesion protein. May be involved in the establishment and maintenance of specific neuronal connections in the brain. This chain is Protocadherin gamma-C3 (PCDHGC3), found in Homo sapiens (Human).